The following is a 232-amino-acid chain: AA9 family lytic polysaccharide monooxygenase C (232 aa).

A signal peptide spans 1–19 (MKAAVSLALLVAVAGAASA). The Cu(2+) site is built by histidine 20 and histidine 91. The cysteines at positions 61 and 180 are disulfide-linked. O2 contacts are provided by histidine 166 and glutamine 175. Tyrosine 177 provides a ligand contact to Cu(2+). Asparagine 184 carries an N-linked (GlcNAc...) asparagine glycan.

Belongs to the polysaccharide monooxygenase AA9 family. The cofactor is Cu(2+).

The protein localises to the secreted. It catalyses the reaction [(1-&gt;4)-beta-D-glucosyl]n+m + reduced acceptor + O2 = 4-dehydro-beta-D-glucosyl-[(1-&gt;4)-beta-D-glucosyl]n-1 + [(1-&gt;4)-beta-D-glucosyl]m + acceptor + H2O.. Functionally, lytic polysaccharide monooxygenase (LPMO) that depolymerizes crystalline and amorphous polysaccharides via the oxidation of scissile alpha- or beta-(1-4)-glycosidic bonds, yielding C1 or C4 oxidation products. Catalysis by LPMOs requires the reduction of the active-site copper from Cu(II) to Cu(I) by a reducing agent and H(2)O(2) or O(2) as a cosubstrate. The sequence is that of AA9 family lytic polysaccharide monooxygenase C from Malbranchea cinnamomea (Thermophilic fungus).